The primary structure comprises 184 residues: ATP-dependent protease subunit HslV (184 aa).

The active site involves threonine 12. Na(+) contacts are provided by alanine 166, cysteine 169, and threonine 172.

This sequence belongs to the peptidase T1B family. HslV subfamily. A double ring-shaped homohexamer of HslV is capped on each side by a ring-shaped HslU homohexamer. The assembly of the HslU/HslV complex is dependent on binding of ATP.

Its subcellular location is the cytoplasm. The catalysed reaction is ATP-dependent cleavage of peptide bonds with broad specificity.. Allosterically activated by HslU binding. Functionally, protease subunit of a proteasome-like degradation complex believed to be a general protein degrading machinery. The polypeptide is ATP-dependent protease subunit HslV (Nitrobacter winogradskyi (strain ATCC 25391 / DSM 10237 / CIP 104748 / NCIMB 11846 / Nb-255)).